Consider the following 555-residue polypeptide: MPSWIGAVILPLLGLLLSLPAGADVKARSCGEVRQAYGAKGFSLADIPYQEIAGEHLRICPQEYTCCTTEMEDKLSQQSKLEFENLVEETSHFVRTTFVSRHKKFDEFFRELLENAEKSLNDMFVRTYGMLYMQNSEVFQDLFTELKRYYTGGNVNLEEMLNDFWARLLERMFQLINPQYHFSEDYLECVSKYTDQLKPFGDVPRKLKIQVTRAFIAARTFVQGLTVGREVANRVSKVSPTPGCIRALMKMLYCPYCRGLPTVRPCNNYCLNVMKGCLANQADLDTEWNLFIDAMLLVAERLEGPFNIESVMDPIDVKISEAIMNMQENSMQVSAKVFQGCGQPKPAPALRSARSAPENFNTRFRPYNPEERPTTAAGTSLDRLVTDIKEKLKLSKKVWSSLPYTICKDESMTAGTSNEEECWNGHSKARYLPEIMNDGLTNQINNPEVDVDITRPDTFIRQQIMALRVMTNKLKNAYNGNDVNFQDTSDESSGSGSGSGCIDDVCPTEFEFVTTEAPAVDPDRREVDSSAAQRGHSLLSWSLTCIVLALQRLCR.

An N-terminal signal peptide occupies residues 1–23 (MPSWIGAVILPLLGLLLSLPAGA). Residues 348 to 357 (PALRSARSAP) show a composition bias toward low complexity. The disordered stretch occupies residues 348–376 (PALRSARSAPENFNTRFRPYNPEERPTTA). S529 carries GPI-anchor amidated serine lipidation. Residues 530 to 555 (SAAQRGHSLLSWSLTCIVLALQRLCR) constitute a propeptide, removed in mature form.

This sequence belongs to the glypican family.

Its subcellular location is the cell membrane. It localises to the secreted. The protein resides in the extracellular space. Cell surface proteoglycan that bears heparan sulfate. Putative cell surface coreceptor for growth factors, extracellular matrix proteins, proteases and anti-proteases. Enhances migration and invasion of cancer cells through WNT5A signaling. This Pongo abelii (Sumatran orangutan) protein is Glypican-6 (GPC6).